We begin with the raw amino-acid sequence, 587 residues long: Kelch-like ECH-associated protein 1B (587 aa).

The region spanning 44 to 117 (CDVTLRVRYC…AYTASISVGE (74 aa)) is the BTB domain. In terms of domain architecture, BACK spans 153–253 (IGIASFAEQI…LTPHFLQRQL (101 aa)). 6 Kelch repeats span residues 292–337 (LIYT…VISG), 338–388 (LLYA…VIDG), 389–435 (MIYA…VINR), 436–482 (LLYA…ALGN), 484–529 (IYVM…THHG), and 530–576 (RIYV…VTME).

It belongs to the KEAP1 family. In terms of assembly, homodimer and heterodimer; heterodimerizes with keap1a. Component of the BCR(KEAP1) E3 ubiquitin ligase complex, at least composed of 2 molecules of cul3, 2 molecules of keap1 (keap1a and/or keap1b), and rbx1. Interacts with nfe2l2/nrf2; the interaction is direct. Non-enzymatic covalent modifications of reactive cysteines by electrophile metabolites inactivate the BCR(KEAP1) complex. As to expression, widely expressed.

The protein localises to the cytoplasm. It localises to the nucleus. It functions in the pathway protein modification; protein ubiquitination. With respect to regulation, ubiquitin ligase activity of the BCR(KEAP1) complex is inhibited by oxidative stress and electrophile metabolites such as sulforaphane. Electrophile metabolites react with reactive cysteine residues in keap1 and trigger non-enzymatic covalent modifications of these cysteine residues, leading to inactivate the ubiquitin ligase activity of the BCR(KEAP1) complex. In terms of biological role, substrate-specific adapter of a BCR (BTB-CUL3-RBX1) E3 ubiquitin ligase complex that regulates the response to oxidative stress by targeting nfe2l2/nrf2 for ubiquitination. Keap1 acts as a key sensor of oxidative and electrophilic stress: in normal conditions, the BCR(KEAP1) complex mediates ubiquitination and degradation of nfe2l2/nrf2, a transcription factor regulating expression of many cytoprotective genes. In response to oxidative stress, different electrophile metabolites trigger non-enzymatic covalent modifications of highly reactive cysteine residues in KEAP1, leading to inactivate the ubiquitin ligase activity of the BCR(KEAP1) complex, promoting nfe2l2/nrf2 nuclear accumulation and expression of phase II detoxifying enzymes. This chain is Kelch-like ECH-associated protein 1B, found in Danio rerio (Zebrafish).